A 319-amino-acid chain; its full sequence is HPr kinase/phosphorylase (319 aa).

Residues histidine 137 and lysine 158 contribute to the active site. 152–159 is a binding site for ATP; it reads GDSGVGKS. Position 159 (serine 159) interacts with Mg(2+). Residue aspartate 176 is the Proton acceptor; for phosphorylation activity. Proton donor; for dephosphorylation activity of the active site. Residues 201 to 210 form an important for the catalytic mechanism of both phosphorylation and dephosphorylation region; the sequence is MEIRGLGIIN. Glutamate 202 lines the Mg(2+) pocket. Arginine 243 is a catalytic residue. Residues 264-269 are important for the catalytic mechanism of dephosphorylation; sequence PVRPGR.

This sequence belongs to the HPrK/P family. Homohexamer. It depends on Mg(2+) as a cofactor.

It carries out the reaction [HPr protein]-L-serine + ATP = [HPr protein]-O-phospho-L-serine + ADP + H(+). The enzyme catalyses [HPr protein]-O-phospho-L-serine + phosphate + H(+) = [HPr protein]-L-serine + diphosphate. Its function is as follows. Catalyzes the ATP- as well as the pyrophosphate-dependent phosphorylation of a specific serine residue in HPr, a phosphocarrier protein of the phosphoenolpyruvate-dependent sugar phosphotransferase system (PTS). HprK/P also catalyzes the pyrophosphate-producing, inorganic phosphate-dependent dephosphorylation (phosphorolysis) of seryl-phosphorylated HPr (P-Ser-HPr). This chain is HPr kinase/phosphorylase, found in Treponema pallidum subsp. pallidum (strain SS14).